We begin with the raw amino-acid sequence, 451 residues long: tRNA-2-methylthio-N(6)-dimethylallyladenosine synthase (451 aa).

In terms of domain architecture, MTTase N-terminal spans 18-134 (ARVYLETYGC…LPNLLDLAES (117 aa)). [4Fe-4S] cluster contacts are provided by C27, C63, C97, C170, C174, and C177. The region spanning 156 to 386 (RKNGHSAFLA…IALQQKISAE (231 aa)) is the Radical SAM core domain. One can recognise a TRAM domain in the interval 389 to 451 (RNDIGNTHEV…TSATLIGNAL (63 aa)).

This sequence belongs to the methylthiotransferase family. MiaB subfamily. Monomer. It depends on [4Fe-4S] cluster as a cofactor.

Its subcellular location is the cytoplasm. It catalyses the reaction N(6)-dimethylallyladenosine(37) in tRNA + (sulfur carrier)-SH + AH2 + 2 S-adenosyl-L-methionine = 2-methylsulfanyl-N(6)-dimethylallyladenosine(37) in tRNA + (sulfur carrier)-H + 5'-deoxyadenosine + L-methionine + A + S-adenosyl-L-homocysteine + 2 H(+). Catalyzes the methylthiolation of N6-(dimethylallyl)adenosine (i(6)A), leading to the formation of 2-methylthio-N6-(dimethylallyl)adenosine (ms(2)i(6)A) at position 37 in tRNAs that read codons beginning with uridine. This chain is tRNA-2-methylthio-N(6)-dimethylallyladenosine synthase, found in Chloroherpeton thalassium (strain ATCC 35110 / GB-78).